Reading from the N-terminus, the 340-residue chain is Holliday junction branch migration complex subunit RuvB (340 aa).

A large ATPase domain (RuvB-L) region spans residues 1–182 (MSDIDPTVRA…FGIPTRLQFY (182 aa)). Residues Leu21, Arg22, Gly63, Lys66, Thr67, Thr68, 129 to 131 (EDF), Arg172, Tyr182, and Arg219 contribute to the ATP site. Thr67 is a Mg(2+) binding site. A small ATPAse domain (RuvB-S) region spans residues 183 to 253 (TEDELFIIVD…LADMALNRLG (71 aa)). The segment at 256 to 340 (HLGLDGADRR…PRAQTDLFEG (85 aa)) is head domain (RuvB-H). Arg292, Arg311, and Arg316 together coordinate DNA.

The protein belongs to the RuvB family. Homohexamer. Forms an RuvA(8)-RuvB(12)-Holliday junction (HJ) complex. HJ DNA is sandwiched between 2 RuvA tetramers; dsDNA enters through RuvA and exits via RuvB. An RuvB hexamer assembles on each DNA strand where it exits the tetramer. Each RuvB hexamer is contacted by two RuvA subunits (via domain III) on 2 adjacent RuvB subunits; this complex drives branch migration. In the full resolvosome a probable DNA-RuvA(4)-RuvB(12)-RuvC(2) complex forms which resolves the HJ.

It localises to the cytoplasm. It carries out the reaction ATP + H2O = ADP + phosphate + H(+). In terms of biological role, the RuvA-RuvB-RuvC complex processes Holliday junction (HJ) DNA during genetic recombination and DNA repair, while the RuvA-RuvB complex plays an important role in the rescue of blocked DNA replication forks via replication fork reversal (RFR). RuvA specifically binds to HJ cruciform DNA, conferring on it an open structure. The RuvB hexamer acts as an ATP-dependent pump, pulling dsDNA into and through the RuvAB complex. RuvB forms 2 homohexamers on either side of HJ DNA bound by 1 or 2 RuvA tetramers; 4 subunits per hexamer contact DNA at a time. Coordinated motions by a converter formed by DNA-disengaged RuvB subunits stimulates ATP hydrolysis and nucleotide exchange. Immobilization of the converter enables RuvB to convert the ATP-contained energy into a lever motion, pulling 2 nucleotides of DNA out of the RuvA tetramer per ATP hydrolyzed, thus driving DNA branch migration. The RuvB motors rotate together with the DNA substrate, which together with the progressing nucleotide cycle form the mechanistic basis for DNA recombination by continuous HJ branch migration. Branch migration allows RuvC to scan DNA until it finds its consensus sequence, where it cleaves and resolves cruciform DNA. The protein is Holliday junction branch migration complex subunit RuvB of Roseobacter denitrificans (strain ATCC 33942 / OCh 114) (Erythrobacter sp. (strain OCh 114)).